A 684-amino-acid chain; its full sequence is DNA ligase (684 aa).

Residues 34–38 (DFQYD), 83–84 (SL), and Glu-117 contribute to the NAD(+) site. Lys-119 functions as the N6-AMP-lysine intermediate in the catalytic mechanism. Residues Arg-140, Glu-186, Lys-300, and Lys-324 each contribute to the NAD(+) site. Zn(2+) is bound by residues Cys-418, Cys-421, Cys-436, and Cys-442. Residues 601–684 (PVNLNFDGMK…EMLGEVGSNE (84 aa)) enclose the BRCT domain.

This sequence belongs to the NAD-dependent DNA ligase family. LigA subfamily. It depends on Mg(2+) as a cofactor. The cofactor is Mn(2+).

The enzyme catalyses NAD(+) + (deoxyribonucleotide)n-3'-hydroxyl + 5'-phospho-(deoxyribonucleotide)m = (deoxyribonucleotide)n+m + AMP + beta-nicotinamide D-nucleotide.. Functionally, DNA ligase that catalyzes the formation of phosphodiester linkages between 5'-phosphoryl and 3'-hydroxyl groups in double-stranded DNA using NAD as a coenzyme and as the energy source for the reaction. It is essential for DNA replication and repair of damaged DNA. The chain is DNA ligase from Chlorobium phaeobacteroides (strain BS1).